Consider the following 327-residue polypeptide: Mitochondrial thiamine pyrophosphate carrier 1 (327 aa).

Solcar repeat units lie at residues 13–114 (GSKL…AAQL), 126–214 (PAAA…LRAP), and 222–317 (FWGG…VLRA). Transmembrane regions (helical) follow at residues 16-36 (LQVV…IAPL), 95-111 (LLYI…YRSA), 132-152 (FVAG…LDLL), 189-209 (GIGP…AAYE), 223-245 (WGGQ…VFPL), and 292-309 (GLTV…VTMW).

The protein belongs to the mitochondrial carrier (TC 2.A.29) family.

The protein localises to the mitochondrion inner membrane. In terms of biological role, mitochondrial transporter that mediates uptake of thiamine pyrophosphate (ThPP) into mitochondria. The polypeptide is Mitochondrial thiamine pyrophosphate carrier 1 (TPC1) (Pyricularia oryzae (strain 70-15 / ATCC MYA-4617 / FGSC 8958) (Rice blast fungus)).